The primary structure comprises 145 residues: UPF0179 protein Maeo_1037 (145 aa).

Belongs to the UPF0179 family.

The protein is UPF0179 protein Maeo_1037 of Methanococcus aeolicus (strain ATCC BAA-1280 / DSM 17508 / OCM 812 / Nankai-3).